We begin with the raw amino-acid sequence, 904 residues long: MQTHEIRKRFLDHFVKAGHTEVPSASVILDDPNLLFVNAGMVQFVPFFLGQRTPPYPTATSIQKCIRTPDIDEVGITTRHNTFFQMAGNFSFGDYFKRGAIELAWALLTNSLAAGGYGLDPERIWTTVYFDDDEAVRLWQEVAGLPAERIQRRGMADNYWSMGIPGPCGPSSEIYYDRGPEFGPAGGPIVSEDRYLEVWNLVFMQNERGEGTTKEDYQILGPLPRNNIDTGMGVERIALVLQDVHNVYETDLLRPVIDTVARVAARAYDVGNHEDDVRYRIIADHSRTAAILIGDGVSPGNDGRGYVLRRLLRRVIRSAKLLGIDAAIVGDLMATVRNAMGPSYPELVADFERISRIAVAEETAFNRTLASGSRLFEEVASSTKKSGATVLSGSDAFTLHDTYGFPIELTLEMAAETGLQVDEIGFRELMAEQRRRAKADAAARKHAHADLSAYRELVDAGATEFTGFDELRSQARILGIFVDGKRVPVVAHGVAGGAGEGQRVELVLDRTPLYAESGGQIADEGTISGTGSSEAARAAVTDVQKIAKTLWVHRVNVESGEFVEGDTVIAAVDPGWRRGATQGHSGTHMVHAALRQVLGPNAVQAGSLNRPGYLRFDFNWQGPLTDDQRTQVEEVTNEAVQADFEVRTFTEQLDKAKAMGAIALFGESYPDEVRVVEMGGPFSLELCGGTHVSNTAQIGPVTILGESSIGSGVRRVEAYVGLDSFRHLAKERALMAGLASSLKVPSEEVPARVANLVERLRAAEKELERVRMASARAAATNAAAGAQRIGNVRLVAQRMSGGMTAADLRSLIGDIRGKLGSEPAVVALIAEGESQTVPYAVAANPAAQDLGIRANDLVKQLAVAVEGRGGGKADLAQGSGKNPTGIDAALDAVRSEIAVIARVG.

4 residues coordinate Zn(2+): His584, His588, Cys687, and His691.

Belongs to the class-II aminoacyl-tRNA synthetase family. Zn(2+) serves as cofactor.

The protein localises to the cytoplasm. The catalysed reaction is tRNA(Ala) + L-alanine + ATP = L-alanyl-tRNA(Ala) + AMP + diphosphate. Catalyzes the attachment of alanine to tRNA(Ala) in a two-step reaction: alanine is first activated by ATP to form Ala-AMP and then transferred to the acceptor end of tRNA(Ala). Also edits incorrectly charged Ser-tRNA(Ala) and Gly-tRNA(Ala) via its editing domain. The chain is Alanine--tRNA ligase from Mycobacterium bovis (strain ATCC BAA-935 / AF2122/97).